Reading from the N-terminus, the 302-residue chain is Probable 2-(5''-triphosphoribosyl)-3'-dephosphocoenzyme-A synthase (302 aa).

This sequence belongs to the CitG/MdcB family.

It carries out the reaction 3'-dephospho-CoA + ATP = 2'-(5''-triphospho-alpha-D-ribosyl)-3'-dephospho-CoA + adenine. In Salmonella gallinarum (strain 287/91 / NCTC 13346), this protein is Probable 2-(5''-triphosphoribosyl)-3'-dephosphocoenzyme-A synthase.